A 363-amino-acid polypeptide reads, in one-letter code: Alanine racemase (363 aa).

Residue Lys34 is the Proton acceptor; specific for D-alanine of the active site. Lys34 is modified (N6-(pyridoxal phosphate)lysine). Position 129 (Arg129) interacts with substrate. Catalysis depends on Tyr256, which acts as the Proton acceptor; specific for L-alanine. Met304 contributes to the substrate binding site.

The protein belongs to the alanine racemase family. Requires pyridoxal 5'-phosphate as cofactor.

The enzyme catalyses L-alanine = D-alanine. It participates in amino-acid biosynthesis; D-alanine biosynthesis; D-alanine from L-alanine: step 1/1. Catalyzes the interconversion of L-alanine and D-alanine. May also act on other amino acids. The sequence is that of Alanine racemase (alr) from Edwardsiella ictaluri (strain 93-146).